A 286-amino-acid chain; its full sequence is Elongation factor Ts (286 aa).

Residues 79–82 are involved in Mg(2+) ion dislocation from EF-Tu; that stretch reads TDFV.

This sequence belongs to the EF-Ts family.

It localises to the cytoplasm. Functionally, associates with the EF-Tu.GDP complex and induces the exchange of GDP to GTP. It remains bound to the aminoacyl-tRNA.EF-Tu.GTP complex up to the GTP hydrolysis stage on the ribosome. This is Elongation factor Ts from Wolbachia sp. subsp. Drosophila simulans (strain wRi).